We begin with the raw amino-acid sequence, 212 residues long: MSKLDEQLIALGAVFEAATLVDRIARTGQVPNAALGCMLGSLLARNPQTTLEIYGGDDLNLRDGYRALVGALERDSSSLQREPLRYALAMIGLERQLDKRGDMLQVIGSRLDQIQQQVEHFGLTHENVVASFGGLYQDTLSTFRQRIQVQGDMRHLQQSDNAAKIRALLLSGIRSARLWRQLGGHRWQLIFSRRKLLDALYPRLRSTQSEDR.

It belongs to the HflD family.

It is found in the cytoplasm. It localises to the cell inner membrane. In Stutzerimonas stutzeri (strain A1501) (Pseudomonas stutzeri), this protein is High frequency lysogenization protein HflD homolog.